Here is a 244-residue protein sequence, read N- to C-terminus: Small ribosomal subunit protein uS2 (244 aa).

This sequence belongs to the universal ribosomal protein uS2 family.

This chain is Small ribosomal subunit protein uS2, found in Psychromonas ingrahamii (strain DSM 17664 / CCUG 51855 / 37).